The chain runs to 203 residues: Peroxiredoxin (203 aa).

The Thioredoxin domain maps to 3 to 156; sequence VVLGQKAPDF…IIRVIKALQF (154 aa). The Cysteine sulfenic acid (-SOH) intermediate role is filled by Cys-44. Arg-119 serves as a coordination point for substrate.

The protein belongs to the peroxiredoxin family. Prx6 subfamily. As to quaternary structure, homodecamer. Pentamer of dimers that assemble into a ring structure.

It is found in the cytoplasm. The catalysed reaction is a hydroperoxide + [thioredoxin]-dithiol = an alcohol + [thioredoxin]-disulfide + H2O. Thiol-specific peroxidase that catalyzes the reduction of hydrogen peroxide and organic hydroperoxides to water and alcohols, respectively. Plays a role in cell protection against oxidative stress by detoxifying peroxides. This is Peroxiredoxin from Thermoplasma volcanium (strain ATCC 51530 / DSM 4299 / JCM 9571 / NBRC 15438 / GSS1).